The sequence spans 189 residues: Putative manganese efflux pump MntP (189 aa).

Transmembrane regions (helical) follow at residues 3–23, 41–61, 62–82, 103–123, 132–152, and 167–187; these read IVSTLLLALAMSADAFAAAVS, MIFGVIEATTPLVGWSLGRVA, ADYVTAWDHWIAFSILAFLGI, SFILLAMTALGTSIDAMSVGV, IVPVAFAIGIVTCIMVSAGVM, and IIGGLILIGIGSLILYKHLYG.

This sequence belongs to the MntP (TC 9.B.29) family.

Its subcellular location is the cell inner membrane. Functionally, probably functions as a manganese efflux pump. This Methylobacillus flagellatus (strain ATCC 51484 / DSM 6875 / VKM B-1610 / KT) protein is Putative manganese efflux pump MntP.